The chain runs to 445 residues: Exodeoxyribonuclease 7 large subunit (445 aa).

This sequence belongs to the XseA family. Heterooligomer composed of large and small subunits.

Its subcellular location is the cytoplasm. The enzyme catalyses Exonucleolytic cleavage in either 5'- to 3'- or 3'- to 5'-direction to yield nucleoside 5'-phosphates.. Functionally, bidirectionally degrades single-stranded DNA into large acid-insoluble oligonucleotides, which are then degraded further into small acid-soluble oligonucleotides. This chain is Exodeoxyribonuclease 7 large subunit, found in Staphylococcus epidermidis (strain ATCC 12228 / FDA PCI 1200).